We begin with the raw amino-acid sequence, 394 residues long: Elongation factor Tu 2 (394 aa).

The 195-residue stretch at 10–204 (KPHVNVGTIG…ALDSYIPEPE (195 aa)) folds into the tr-type G domain. Residues 19–26 (GHVDHGKT) are G1. 19 to 26 (GHVDHGKT) contacts GTP. Thr-26 lines the Mg(2+) pocket. The G2 stretch occupies residues 60–64 (GITIS). Positions 81–84 (DCPG) are G3. Residues 81-85 (DCPGH) and 136-139 (NKCD) each bind GTP. Positions 136-139 (NKCD) are G4. The segment at 174–176 (SAL) is G5.

The protein belongs to the TRAFAC class translation factor GTPase superfamily. Classic translation factor GTPase family. EF-Tu/EF-1A subfamily. In terms of assembly, monomer.

The protein localises to the cytoplasm. It catalyses the reaction GTP + H2O = GDP + phosphate + H(+). Its function is as follows. GTP hydrolase that promotes the GTP-dependent binding of aminoacyl-tRNA to the A-site of ribosomes during protein biosynthesis. In Photorhabdus laumondii subsp. laumondii (strain DSM 15139 / CIP 105565 / TT01) (Photorhabdus luminescens subsp. laumondii), this protein is Elongation factor Tu 2.